A 352-amino-acid polypeptide reads, in one-letter code: Fe(3+) ions import ATP-binding protein FbpC 1 (352 aa).

An ABC transporter domain is found at 11 to 241 (VELKHITKRF…PASRFMASFM (231 aa)). An ATP-binding site is contributed by 43–50 (GPSGCGKT).

Belongs to the ABC transporter superfamily. Fe(3+) ion importer (TC 3.A.1.10) family. The complex is composed of two ATP-binding proteins (FbpC), two transmembrane proteins (FbpB) and a solute-binding protein (FbpA).

The protein resides in the cell inner membrane. It catalyses the reaction Fe(3+)(out) + ATP + H2O = Fe(3+)(in) + ADP + phosphate + H(+). Its function is as follows. Part of the ABC transporter complex FbpABC involved in Fe(3+) ions import. Responsible for energy coupling to the transport system. This Pectobacterium atrosepticum (strain SCRI 1043 / ATCC BAA-672) (Erwinia carotovora subsp. atroseptica) protein is Fe(3+) ions import ATP-binding protein FbpC 1.